The sequence spans 130 residues: Small ribosomal subunit protein uS11 (130 aa).

The protein belongs to the universal ribosomal protein uS11 family. As to quaternary structure, part of the 30S ribosomal subunit. Interacts with proteins S7 and S18. Binds to IF-3.

In terms of biological role, located on the platform of the 30S subunit, it bridges several disparate RNA helices of the 16S rRNA. Forms part of the Shine-Dalgarno cleft in the 70S ribosome. The polypeptide is Small ribosomal subunit protein uS11 (Prochlorococcus marinus (strain MIT 9215)).